A 548-amino-acid chain; its full sequence is Probable inorganic phosphate transporter 1-5 (548 aa).

Over 1 to 23 (MVQDRKVLDALDTAKTQWYHFTA) the chain is Cytoplasmic. Residues 24 to 44 (VVIAGMGFFTDAYDLFSISLV) form a helical membrane-spanning segment. The Extracellular portion of the chain corresponds to 45–69 (TKLLGRIYYFNPASKSPGSLPPNVS). Residues 70-90 (AAVNGVAFCGTLAGQLFFGWL) form a helical membrane-spanning segment. Residues 91-98 (GDKMGRKK) lie on the Cytoplasmic side of the membrane. A helical transmembrane segment spans residues 99 to 119 (VYGMTLMLMVICCLASGLSFG). Residues 120-123 (SSAK) lie on the Extracellular side of the membrane. The helical transmembrane segment at 124-144 (GVMATLCFFRFWLGFGIGGDY) threads the bilayer. The Cytoplasmic segment spans residues 145 to 163 (PLSATIMSEYANKRTRGAF). Residues 164-184 (IAAVFAMQGFGNLTGGIVAII) traverse the membrane as a helical segment. The Extracellular segment spans residues 185 to 210 (VSAAFKLRFDAPAYRDDRAGSTVPQA). Residues 211–231 (DYAWRIVLMFGAIPALLTYYW) traverse the membrane as a helical segment. The Cytoplasmic segment spans residues 232-303 (RMKMPETARY…REFARRHGHH (72 aa)). A helical transmembrane segment spans residues 304–324 (LLGTTVCWFVLDIAYYSQNLF). The Extracellular portion of the chain corresponds to 325–355 (QKDIYTAVQWLPKADTMSALEEMFKISRAQT). The helical transmembrane segment at 356 to 376 (LVALCGTIPGYWFTVLFIDIV) threads the bilayer. The Cytoplasmic portion of the chain corresponds to 377-378 (GR). A helical transmembrane segment spans residues 379–399 (FAIQLGGFFLMTAFMLGLAVP). At 400–405 (YHHWTT) the chain is on the extracellular side. Residues 406 to 426 (PGNHVGFVVMYAFTFFFANFG) form a helical membrane-spanning segment. The Cytoplasmic segment spans residues 427–449 (PNSTTFIVPAEIFPARLRSTCHG). Residues 450–470 (ISSAAGKMGAIVGSFGFLYAA) form a helical membrane-spanning segment. Residues 471-490 (QSTDPSKTDAGYPRGIGVRN) are Extracellular-facing. Residues 491–511 (SLFLLAGCNVVGFLFTFLVPE) traverse the membrane as a helical segment. Residues 512-548 (SKGKSLEELSGENEMEAEPAAATNSYRQTVPDSGQSE) lie on the Cytoplasmic side of the membrane. The interval 518-548 (EELSGENEMEAEPAAATNSYRQTVPDSGQSE) is disordered. Residues 533-548 (ATNSYRQTVPDSGQSE) are compositionally biased toward polar residues.

This sequence belongs to the major facilitator superfamily. Phosphate:H(+) symporter (TC 2.A.1.9) family. As to expression, expressed at low levels in roots.

The protein localises to the membrane. Functionally, high-affinity transporter for external inorganic phosphate. The polypeptide is Probable inorganic phosphate transporter 1-5 (PHT1-5) (Oryza sativa subsp. japonica (Rice)).